Here is a 158-residue protein sequence, read N- to C-terminus: Superoxide dismutase [Cu-Zn] (158 aa).

Positions 46, 48, and 63 each coordinate Cu cation. A disulfide bridge connects residues Cys57 and Cys149. His63, His71, His80, and Asp83 together coordinate Zn(2+). His120 serves as a coordination point for Cu cation.

This sequence belongs to the Cu-Zn superoxide dismutase family. In terms of assembly, homodimer. It depends on Cu cation as a cofactor. Zn(2+) serves as cofactor.

Its subcellular location is the cytoplasm. The enzyme catalyses 2 superoxide + 2 H(+) = H2O2 + O2. Destroys radicals which are normally produced within the cells and which are toxic to biological systems. The chain is Superoxide dismutase [Cu-Zn] (sod-1) from Onchocerca volvulus.